The chain runs to 177 residues: UPF0316 protein STH2077 (177 aa).

The next 2 membrane-spanning stretches (helical) occupy residues 9 to 29 and 41 to 61; these read AALD…VNTV and LASA…GLVV.

It belongs to the UPF0316 family.

Its subcellular location is the cell membrane. This chain is UPF0316 protein STH2077, found in Symbiobacterium thermophilum (strain DSM 24528 / JCM 14929 / IAM 14863 / T).